The chain runs to 297 residues: 32 kDa beta-galactoside-binding lectin lec-3 (297 aa).

Galectin domains lie at 11 to 142 (YRSK…VQWG) and 151 to 290 (ESGI…IQVV). Residue 224–230 (WGNEERE) participates in a beta-D-galactoside binding.

Binds galactose. In Caenorhabditis elegans, this protein is 32 kDa beta-galactoside-binding lectin lec-3 (lec-3).